The sequence spans 187 residues: Plasmodium-specific hydrophobic abundant protein (187 aa).

The first 18 residues, 1-18 (MMKYVFVALCLFAVVALA), serve as a signal peptide directing secretion.

To HAP-S protein.

Its subcellular location is the membrane. The protein is Plasmodium-specific hydrophobic abundant protein of Physarum polycephalum (Slime mold).